A 274-amino-acid chain; its full sequence is Cytochrome c oxidase subunit 3 (274 aa).

A run of 7 helical transmembrane segments spans residues 22-42 (PSPW…GGVM), 47-67 (FAAG…SMLL), 93-113 (GVVL…WAFF), 137-157 (PFEV…TITV), 170-190 (TILY…LQWV), 208-228 (FFVA…FLTV), and 248-268 (AAIW…VSVY).

It belongs to the cytochrome c oxidase subunit 3 family. In terms of assembly, component of the cytochrome c oxidase (complex IV, CIV), a multisubunit enzyme composed of a catalytic core of 3 subunits and several supernumerary subunits. The complex exists as a monomer or a dimer and forms supercomplexes (SCs) in the inner mitochondrial membrane with ubiquinol-cytochrome c oxidoreductase (cytochrome b-c1 complex, complex III, CIII).

The protein localises to the mitochondrion inner membrane. It catalyses the reaction 4 Fe(II)-[cytochrome c] + O2 + 8 H(+)(in) = 4 Fe(III)-[cytochrome c] + 2 H2O + 4 H(+)(out). Its function is as follows. Component of the cytochrome c oxidase, the last enzyme in the mitochondrial electron transport chain which drives oxidative phosphorylation. The respiratory chain contains 3 multisubunit complexes succinate dehydrogenase (complex II, CII), ubiquinol-cytochrome c oxidoreductase (cytochrome b-c1 complex, complex III, CIII) and cytochrome c oxidase (complex IV, CIV), that cooperate to transfer electrons derived from NADH and succinate to molecular oxygen, creating an electrochemical gradient over the inner membrane that drives transmembrane transport and the ATP synthase. Cytochrome c oxidase is the component of the respiratory chain that catalyzes the reduction of oxygen to water. Electrons originating from reduced cytochrome c in the intermembrane space (IMS) are transferred via the dinuclear copper A center (CU(A)) of subunit 2 and heme A of subunit 1 to the active site in subunit 1, a binuclear center (BNC) formed by heme A3 and copper B (CU(B)). The BNC reduces molecular oxygen to 2 water molecules using 4 electrons from cytochrome c in the IMS and 4 protons from the mitochondrial matrix. In Allomyces macrogynus, this protein is Cytochrome c oxidase subunit 3 (COX3).